A 115-amino-acid polypeptide reads, in one-letter code: NADH-ubiquinone oxidoreductase chain 3 (115 aa).

3 helical membrane passes run 5–25 (LTFMTDVILALLLVMIAFWLP), 55–75 (FFLVAITFLLFDLEIALLLPL), and 86–106 (LMLTMALLLISILAAGLAYEW).

This sequence belongs to the complex I subunit 3 family. Core subunit of respiratory chain NADH dehydrogenase (Complex I) which is composed of 45 different subunits. Interacts with TMEM186. Interacts with TMEM242.

It localises to the mitochondrion inner membrane. It carries out the reaction a ubiquinone + NADH + 5 H(+)(in) = a ubiquinol + NAD(+) + 4 H(+)(out). Functionally, core subunit of the mitochondrial membrane respiratory chain NADH dehydrogenase (Complex I) which catalyzes electron transfer from NADH through the respiratory chain, using ubiquinone as an electron acceptor. Essential for the catalytic activity of complex I. This Avahi unicolor (Sambirano woolly lemur) protein is NADH-ubiquinone oxidoreductase chain 3.